Consider the following 187-residue polypeptide: HTH-type transcriptional regulator NfxB (187 aa).

The segment at residues 26–45 (LKELAEAAGVSKATLHRFCG) is a DNA-binding region (H-T-H motif).

Its function is as follows. Confers resistance to guinolones. May negatively regulate the expression of genes that are associated with cell permeability to drugs. This Pseudomonas aeruginosa (strain ATCC 15692 / DSM 22644 / CIP 104116 / JCM 14847 / LMG 12228 / 1C / PRS 101 / PAO1) protein is HTH-type transcriptional regulator NfxB (nfxB).